The primary structure comprises 323 residues: Type II restriction enzyme BsoBI (323 aa).

Mg(2+) contacts are provided by Asp212, Glu240, and Lys242.

Homodimer.

The catalysed reaction is Endonucleolytic cleavage of DNA to give specific double-stranded fragments with terminal 5'-phosphates.. A P subtype restriction enzyme that recognizes the double-stranded sequence 5'-CYCGRG-3' and cleaves after C-1. The sequence is that of Type II restriction enzyme BsoBI from Geobacillus stearothermophilus (Bacillus stearothermophilus).